The chain runs to 409 residues: uncharacterized protein (409 aa).

The region spanning 1 to 209 is the EAL domain; the sequence is MRVFVARQPI…GHDLSTHFYS (209 aa). Positions 203–392 constitute an HDOD domain; it reads LSTHFYSYYE…GNQLDKEEAY (190 aa).

This is an uncharacterized protein from Bacillus subtilis (strain 168).